The following is a 523-amino-acid chain: 2-isopropylmalate synthase (523 aa).

A Pyruvate carboxyltransferase domain is found at 5–267 (VIIFDTTLRD…HTAINHQEIW (263 aa)). Residues aspartate 14, histidine 202, histidine 204, and asparagine 238 each contribute to the Mn(2+) site. The segment at 392–523 (RLDYFSVQSG…QHNENNKETV (132 aa)) is regulatory domain.

This sequence belongs to the alpha-IPM synthase/homocitrate synthase family. LeuA type 1 subfamily. Homodimer. Mn(2+) serves as cofactor.

It localises to the cytoplasm. It catalyses the reaction 3-methyl-2-oxobutanoate + acetyl-CoA + H2O = (2S)-2-isopropylmalate + CoA + H(+). It functions in the pathway amino-acid biosynthesis; L-leucine biosynthesis; L-leucine from 3-methyl-2-oxobutanoate: step 1/4. Catalyzes the condensation of the acetyl group of acetyl-CoA with 3-methyl-2-oxobutanoate (2-ketoisovalerate) to form 3-carboxy-3-hydroxy-4-methylpentanoate (2-isopropylmalate). The sequence is that of 2-isopropylmalate synthase from Shigella flexneri serotype 5b (strain 8401).